The following is a 102-amino-acid chain: MAGQKIRIRLKSYDHEVIDVSARKIVETVTRAGATVVGPVPLPTEKNVYCVIRSPHKYKDSREHFEMRTHKRLIDIIDPTPKAVDSLMRLDLPADVNIEIKL.

It belongs to the universal ribosomal protein uS10 family. As to quaternary structure, part of the 30S ribosomal subunit.

Functionally, involved in the binding of tRNA to the ribosomes. This chain is Small ribosomal subunit protein uS10, found in Arthrobacter sp. (strain FB24).